The primary structure comprises 512 residues: MAATLTEAGTGPAATREFVEGWTLAQTLGEGAYGEVKLLINRQTGEAVAMKMVDLKKHPDAANSVRKEVCIQKMLQDKHILRFFGKRSQGSVEYIFLEYAAGGELFDRIEPDVGMPQHEAQRYFTQLLSGLNYLHQRGIAHRDLKPENLLLDEHDNVKISDFGMATMFRCKGKERLLDKRCGTLPYVAPEVLQKAYHAQPADLWSCGVILVTMLAGELPWDQPSTNCTEFTNWRDNDHWQLQTPWSKLDTLAISLLRKLLATSPGTRLTLEKTLDHKWCNMQFADNERSYDLVDSAAALEICSPKAKRQRLQSSAHLSNGLDDSISRNYCSQPMPTMRSDDDFNVRLGSGRSKEDGGDRQTLAQEARLSYSFSQPALLDDLLLATQMNQTQNASQNYFQRLVRRMTRFFVTTRWDDTIKRLVGTIERLGGYTCKFGDDGVVTVSTVDRNKLRLVFKAHIIEMDGKILVDCRLSKGCGLEFKRRFIKIKNALEDIVLKGPTTWPIAIATNSVP.

Residues 22–279 (WTLAQTLGEG…LEKTLDHKWC (258 aa)) form the Protein kinase domain. ATP contacts are provided by residues 28-36 (LGEGAYGEV) and Lys-51. The active-site Proton acceptor is Asp-143. The disordered stretch occupies residues 335–360 (PTMRSDDDFNVRLGSGRSKEDGGDRQ).

The protein belongs to the protein kinase superfamily. CAMK Ser/Thr protein kinase family. NIM1 subfamily. Post-translationally, phosphorylated in a MEI-41/ATR dependent manner in response to DNA damage or the presence of unreplicated DNA.

It localises to the nucleus. It catalyses the reaction L-seryl-[protein] + ATP = O-phospho-L-seryl-[protein] + ADP + H(+). The catalysed reaction is L-threonyl-[protein] + ATP = O-phospho-L-threonyl-[protein] + ADP + H(+). Serine/threonine-protein kinase which is required for checkpoint-mediated cell cycle arrest and activation of DNA repair in response to the presence of DNA damage or unreplicated DNA. May also negatively regulate cell cycle progression during unperturbed cell cycles. May phosphorylate the CDC25 phosphatase stg, which promotes its degradation. This results in increased inhibitory tyrosine phosphorylation of Cdk1-cyclin complexes and consequent inhibition of cell cycle progression. The protein is Serine/threonine-protein kinase grp of Drosophila melanogaster (Fruit fly).